The chain runs to 469 residues: COP9 signalosome complex subunit 5 (469 aa).

The 138-residue stretch at 63–200 folds into the MPN domain; it reads TYISSLALCK…IGAFRTFPDN (138 aa). His146, His148, and Asp159 together coordinate Zn(2+). The short motif at 146-159 is the JAMM motif element; the sequence is HSHPGYGCWLSGID. 2 disordered regions span residues 201–220 and 331–404; these read YKSP…PPSK and YDSF…KRPM. The segment covering 344–353 has biased composition (acidic residues); sequence DEMDDESDLD.

The protein belongs to the peptidase M67A family. CSN5 subfamily. As to quaternary structure, component of the COP9 signalosome (CSN) complex.

The protein localises to the cytoplasm. Its subcellular location is the nucleus. In terms of biological role, catalytic Component of the COP9 signalosome (CSN) complex that acts as an regulator of the ubiquitin (Ubl) conjugation pathway by mediating the deneddylation of the cullin subunit of SCF-type E3 ubiquitin-protein ligase complexes. The CSN complex is involved in the regulation of the mating pheromone response. This chain is COP9 signalosome complex subunit 5 (RRI1), found in Debaryomyces hansenii (strain ATCC 36239 / CBS 767 / BCRC 21394 / JCM 1990 / NBRC 0083 / IGC 2968) (Yeast).